The chain runs to 551 residues: Urocanate hydratase (551 aa).

NAD(+)-binding positions include 48–49 (GG), Gln126, 172–174 (GMG), Glu192, Arg197, 238–239 (NA), 259–263 (QTSAH), 269–270 (YI), and Tyr318. Cys406 is a catalytic residue. NAD(+) is bound at residue Gly488.

It belongs to the urocanase family. Requires NAD(+) as cofactor.

The protein resides in the cytoplasm. The catalysed reaction is 4-imidazolone-5-propanoate = trans-urocanate + H2O. It functions in the pathway amino-acid degradation; L-histidine degradation into L-glutamate; N-formimidoyl-L-glutamate from L-histidine: step 2/3. Its function is as follows. Catalyzes the conversion of urocanate to 4-imidazolone-5-propionate. The polypeptide is Urocanate hydratase (Geobacillus kaustophilus (strain HTA426)).